A 217-amino-acid chain; its full sequence is ITG-like peptide (217 aa).

The N-terminal stretch at 1-21 is a signal peptide; it reads MHRTMAVTAVLVLSAAGAAHA. Residues 22 to 208 constitute a propeptide that is removed on maturation; the sequence is WGGLFNRFSS…REFVQHTAGE (187 aa).

In terms of tissue distribution, ITG-like peptide: Expressed in corpora cardiaca (CC), corpora allata (CA), antennal lobe (AL) and gnathal ganglion (GNG) (at protein level). Expression in AL detected in all animals, expression in GNG detected in most animals and in CA and CC detected in few animals (at protein level).

Its subcellular location is the secreted. In Agrotis ipsilon (Black cutworm moth), this protein is ITG-like peptide.